The chain runs to 338 residues: Ketol-acid reductoisomerase (NADP(+)) (338 aa).

The KARI N-terminal Rossmann domain occupies 1-181; the sequence is MKVYYDKDCD…GGGRTGIIET (181 aa). NADP(+) is bound by residues 24 to 27, Arg47, Ser50, Thr52, and 82 to 85; these read YGSQ and DEFQ. The active site involves His107. Residue Gly133 participates in NADP(+) binding. Positions 182 to 327 constitute a KARI C-terminal knotted domain; the sequence is TFKDETETDL…EQLRAMMPWI (146 aa). The Mg(2+) site is built by Asp190, Glu194, Glu226, and Glu230. Ser251 serves as a coordination point for substrate.

Belongs to the ketol-acid reductoisomerase family. The cofactor is Mg(2+).

It carries out the reaction (2R)-2,3-dihydroxy-3-methylbutanoate + NADP(+) = (2S)-2-acetolactate + NADPH + H(+). The catalysed reaction is (2R,3R)-2,3-dihydroxy-3-methylpentanoate + NADP(+) = (S)-2-ethyl-2-hydroxy-3-oxobutanoate + NADPH + H(+). The protein operates within amino-acid biosynthesis; L-isoleucine biosynthesis; L-isoleucine from 2-oxobutanoate: step 2/4. It participates in amino-acid biosynthesis; L-valine biosynthesis; L-valine from pyruvate: step 2/4. Involved in the biosynthesis of branched-chain amino acids (BCAA). Catalyzes an alkyl-migration followed by a ketol-acid reduction of (S)-2-acetolactate (S2AL) to yield (R)-2,3-dihydroxy-isovalerate. In the isomerase reaction, S2AL is rearranged via a Mg-dependent methyl migration to produce 3-hydroxy-3-methyl-2-ketobutyrate (HMKB). In the reductase reaction, this 2-ketoacid undergoes a metal-dependent reduction by NADPH to yield (R)-2,3-dihydroxy-isovalerate. This Ectopseudomonas mendocina (strain ymp) (Pseudomonas mendocina) protein is Ketol-acid reductoisomerase (NADP(+)).